A 258-amino-acid polypeptide reads, in one-letter code: Phosphonates import ATP-binding protein PhnC 3 (258 aa).

Residues 2–246 (IEFKNVSLVY…TFEEIYGRKI (245 aa)) form the ABC transporter domain. 35 to 42 (GLSGAGKS) is an ATP binding site.

This sequence belongs to the ABC transporter superfamily. Phosphonates importer (TC 3.A.1.9.1) family. In terms of assembly, the complex is composed of two ATP-binding proteins (PhnC), two transmembrane proteins (PhnE) and a solute-binding protein (PhnD).

It localises to the cell membrane. It catalyses the reaction phosphonate(out) + ATP + H2O = phosphonate(in) + ADP + phosphate + H(+). Part of the ABC transporter complex PhnCDE involved in phosphonates import. Responsible for energy coupling to the transport system. The chain is Phosphonates import ATP-binding protein PhnC 3 from Halalkalibacterium halodurans (strain ATCC BAA-125 / DSM 18197 / FERM 7344 / JCM 9153 / C-125) (Bacillus halodurans).